The following is a 280-amino-acid chain: Probable endonuclease 4 (280 aa).

9 residues coordinate Zn(2+): His68, His108, Glu143, Asp177, His180, His214, Asp227, His229, and Glu259.

Belongs to the AP endonuclease 2 family. It depends on Zn(2+) as a cofactor.

It catalyses the reaction Endonucleolytic cleavage to 5'-phosphooligonucleotide end-products.. In terms of biological role, endonuclease IV plays a role in DNA repair. It cleaves phosphodiester bonds at apurinic or apyrimidinic (AP) sites, generating a 3'-hydroxyl group and a 5'-terminal sugar phosphate. In Cenarchaeum symbiosum (strain A), this protein is Probable endonuclease 4.